The chain runs to 534 residues: MLKKLLSCCITSALCFHSSLAFSQPNEIADSAELQQAPDTLPATLMLAPDDIAIADRYIVVFQQPQMMASSSPEFEQFTQQSVDRMSGLYSIQVESVFDHSISGFVANLSPEQLKDLRSDPRVDYIEQDRILSLDPIVSADANQTNAIWGLDRIDQRNLPLDNNYSANFDGTGVTAYVIDTGVNNAHVEFGGRSVSGYDFVDNDADASDCNGHGTHVAGTIGGSLYGVAKNVNLVGVRVLSCSGSGSTSGVIAGVDWVAANASGPSVANMSLGGGQSVALDSAVQSAVQSGVSFMLAAGNSNADACNYSPARVATGVTVGSTTSTDARSSFSNWGSCVDVFAPGSQIKSAWYDGGYKTISGTSMATPHVAGVAALYLQENSSVSPSQVEALIVSRASTGKVTDTRGSVNKLLYSLTDADCGQDCGGPDPTPDPEGKLTSGVPVSGLSGSSGQVAYYYVDVEAGQRLTVQMYGGSGDADLYLRFGAKPTLNAWDCRPFKYGNNETCTVSATQSGRYHVMIQGYSNYSGVSIQANY.

The signal sequence occupies residues 1–21; that stretch reads MLKKLLSCCITSALCFHSSLA. The propeptide occupies 22 to 141; it reads FSQPNEIADS…LSLDPIVSAD (120 aa). The 78-residue stretch at 57-134 folds into the Inhibitor I9 domain; it reads RYIVVFQQPQ…YIEQDRILSL (78 aa). The Peptidase S8 domain maps to 148–419; it reads IWGLDRIDQR…KLLYSLTDAD (272 aa). Active-site charge relay system residues include Asp-180, His-213, and Ser-363. The interval 423-442 is disordered; sequence DCGGPDPTPDPEGKLTSGVP.

This sequence belongs to the peptidase S8 family.

This chain is Alkaline serine exoprotease A (proA), found in Vibrio alginolyticus.